The sequence spans 364 residues: Carbamoyl phosphate synthase pyrimidine-specific small chain (364 aa).

Residues 1–171 (MKRRLVLENG…AYPSPGRGKR (171 aa)) form a CPSase region. 3 residues coordinate L-glutamine: S45, G219, and G221. A Glutamine amidotransferase type-1 domain is found at 171-356 (RIVLVDFGMK…IEMIETTEKE (186 aa)). C246 functions as the Nucleophile in the catalytic mechanism. L-glutamine-binding residues include L247, Q250, N288, G290, and Y291. Residues H329 and E331 contribute to the active site.

The protein belongs to the CarA family. In terms of assembly, composed of two chains; the small (or glutamine) chain promotes the hydrolysis of glutamine to ammonia, which is used by the large (or ammonia) chain to synthesize carbamoyl phosphate. Tetramer of heterodimers (alpha,beta)4. Interacts with BrxC.

It catalyses the reaction hydrogencarbonate + L-glutamine + 2 ATP + H2O = carbamoyl phosphate + L-glutamate + 2 ADP + phosphate + 2 H(+). It carries out the reaction L-glutamine + H2O = L-glutamate + NH4(+). It functions in the pathway pyrimidine metabolism; UMP biosynthesis via de novo pathway; (S)-dihydroorotate from bicarbonate: step 1/3. In terms of biological role, small subunit of the glutamine-dependent carbamoyl phosphate synthetase (CPSase). CPSase catalyzes the formation of carbamoyl phosphate from the ammonia moiety of glutamine, carbonate, and phosphate donated by ATP, constituting the first step of the biosynthetic pathway leading to arginine and/or urea. The small subunit (glutamine amidotransferase) binds and cleaves glutamine to supply the large subunit with the substrate ammonia. In Bacillus subtilis (strain 168), this protein is Carbamoyl phosphate synthase pyrimidine-specific small chain.